Reading from the N-terminus, the 488-residue chain is MSIRHCVAVDLGASSGRVMLASYQSGPRALTLREIHRFTNSLQKVDGFDCWDVDSLEGEIRRGLEKVCEQGILIDSIGIDTWGVDYVLLDKQGQRVGLPISYRDDRTQGLLRHAEEQLGRAEIYRRSGIQFLPFNTLYQLRALVEQQPELVSQAAHALLIPDYFSFRLTGNLNWEYTNATTTQLVNINSDSWDETLLNWTGAPLAWFGTPTHPGNVIGHWICPQGNRIPVVAVASHDTASAVIASPLADRHAAYLSSGTWSLMGFESLTPYTCDAALQANITNEGGAEGRYRVLKNIMGLWLLQRVLKEQHVSDLQGLIARTAALPACRFMIDCNDDRFINPASMSAEIQAACRDAGQPVPESDAELARCIFDSLALLYARVLNELAALRGQPFSQLHIVGGGCQNALLNQLCADACGIAVVAGPIEASTLGNIGIQLMTLDELANVDEFRQVVRDNAALTAFTPNPDSEIARFVAQFQPQQTKELCA.

13 to 17 (ASSGR) contacts ATP. An intrachain disulfide couples C68 to C222. Residues G83 and 236 to 238 (HDT) each bind substrate. The active-site Proton acceptor is the D237. T259 serves as a coordination point for ATP. Residue N296 coordinates substrate. Q304 is an ATP binding site. C353 and C370 are joined by a disulfide. G402 provides a ligand contact to ATP. C413 and C417 are disulfide-bonded.

It belongs to the rhamnulokinase family. Mg(2+) is required as a cofactor.

The catalysed reaction is L-rhamnulose + ATP = L-rhamnulose 1-phosphate + ADP + H(+). Its pathway is carbohydrate degradation; L-rhamnose degradation; glycerone phosphate from L-rhamnose: step 2/3. Functionally, involved in the catabolism of L-rhamnose (6-deoxy-L-mannose). Catalyzes the transfer of the gamma-phosphate group from ATP to the 1-hydroxyl group of L-rhamnulose to yield L-rhamnulose 1-phosphate. The polypeptide is Rhamnulokinase (Klebsiella pneumoniae (strain 342)).